Reading from the N-terminus, the 617-residue chain is Bifunctional TH2 protein, mitochondrial (617 aa).

The N-terminal 28 residues, M1–R28, are a transit peptide targeting the mitochondrion. Residue D107 coordinates substrate. The Nucleophile role is filled by C213. Substrate contacts are provided by Y217 and Y244. The Proton donor role is filled by E286.

The protein in the N-terminal section; belongs to the TenA family. In the C-terminal section; belongs to the HAD-like hydrolase superfamily.

The protein localises to the mitochondrion. It localises to the cytoplasm. The catalysed reaction is thiamine phosphate + H2O = thiamine + phosphate. It carries out the reaction 4-amino-5-aminomethyl-2-methylpyrimidine + H2O = 4-amino-5-hydroxymethyl-2-methylpyrimidine + NH4(+). In terms of biological role, may be involved in the salvage of thiamine breakdown products. This protein has a haloacid dehalogenase family domain fused to its TenA domain. Phosphatase with the highest activity against thiamine monophosphate (ThMP) and, with a lower activity, against thiamine diphosphate (ThDP), flavin mononucleotide, inorganic pyrophosphate, CTP and dATP. Has a thiamine salvage hydrolase activity, but only against 4-amino-5-aminomethyl-2-methylpyrimidine (amino-HMP) and not against N-formylamino-HMP, desthiothiamine, thiamine, ThMP, and ThDP. The protein is Bifunctional TH2 protein, mitochondrial of Arabidopsis thaliana (Mouse-ear cress).